The chain runs to 575 residues: Adenine deaminase (575 aa).

This sequence belongs to the metallo-dependent hydrolases superfamily. Adenine deaminase family. Mn(2+) is required as a cofactor.

The catalysed reaction is adenine + H2O + H(+) = hypoxanthine + NH4(+). The chain is Adenine deaminase from Nitratidesulfovibrio vulgaris (strain ATCC 29579 / DSM 644 / CCUG 34227 / NCIMB 8303 / VKM B-1760 / Hildenborough) (Desulfovibrio vulgaris).